We begin with the raw amino-acid sequence, 905 residues long: Patched domain-containing protein 3 (905 aa).

A disordered region spans residues 1–67; it reads MISSKVAPGE…PVGQEAPPPR (67 aa). Residues 94–114 form a helical membrane-spanning segment; that stretch reads WLFLLGPVLLTASLGTGLIFL. Asn146, Asn199, Asn229, and Asn233 each carry an N-linked (GlcNAc...) asparagine glycan. The next 6 helical transmembrane spans lie at 337–357, 369–389, 391–411, 441–461, 475–495, and 558–578; these read TVIPLFHLAYILIILFAVVSC, VAVFGVFSVAMSVVSGFGLML, IGVPFVIIVANSPFLILGVGV, VAVSITITTITNVLAFYTGIT, GTTLLFCYFYSITCFGAIMAL, and FIVVLIYIFYIISSIYGCFQV. The SSD domain maps to 338-495; that stretch reads VIPLFHLAYI…ITCFGAIMAL (158 aa). N-linked (GlcNAc...) asparagine glycans are attached at residues Asn647, Asn661, and Asn692. A run of 5 helical transmembrane segments spans residues 759–779, 781–801, 813–833, 849–869, and 882–902; these read VMIASTAMFIVSLLLIPHPVC, LWVTFAIASVIVGVTGFMAFW, LVICIGFSFDFSAHISYAFVS, LLGYPVLQSAISTIIGVCVLA, and IMFLVMFFGAAHGLIFIPVFL.

Belongs to the patched family. In terms of tissue distribution, expressed in germ cells of the testis (at protein level).

The protein localises to the cell projection. It localises to the cilium. The protein resides in the flagellum membrane. Its subcellular location is the endoplasmic reticulum membrane. Functionally, may play a role in sperm development or sperm function. However, does not appear to have an essential role in spermatogenesis or male fertility. In Rattus norvegicus (Rat), this protein is Patched domain-containing protein 3.